Reading from the N-terminus, the 254-residue chain is Adenosylcobinamide-GDP ribazoletransferase (254 aa).

7 helical membrane passes run 27-47, 50-70, 104-124, 131-151, 170-190, 194-214, and 233-253; these read SSLYWFPVVGLVIGGIVVLFA, GMGAGWPELAAVLALLGGFIL, VGSFGSLALIGVMLFKWICLL, AYGMIAAGVVLSRTAQVLLAA, AGWPHLLVASVSGVVLLFVLL, VVPSSILLFGSVVALFFVGWL, and LVEIAVWFVAALWLKGLFSAI.

Belongs to the CobS family. The cofactor is Mg(2+).

It localises to the cell inner membrane. The catalysed reaction is alpha-ribazole + adenosylcob(III)inamide-GDP = adenosylcob(III)alamin + GMP + H(+). It carries out the reaction alpha-ribazole 5'-phosphate + adenosylcob(III)inamide-GDP = adenosylcob(III)alamin 5'-phosphate + GMP + H(+). It participates in cofactor biosynthesis; adenosylcobalamin biosynthesis; adenosylcobalamin from cob(II)yrinate a,c-diamide: step 7/7. Functionally, joins adenosylcobinamide-GDP and alpha-ribazole to generate adenosylcobalamin (Ado-cobalamin). Also synthesizes adenosylcobalamin 5'-phosphate from adenosylcobinamide-GDP and alpha-ribazole 5'-phosphate. This Chlorobaculum parvum (strain DSM 263 / NCIMB 8327) (Chlorobium vibrioforme subsp. thiosulfatophilum) protein is Adenosylcobinamide-GDP ribazoletransferase.